Here is a 408-residue protein sequence, read N- to C-terminus: Multidrug resistance protein MdtG (408 aa).

The next 10 helical transmembrane spans lie at 16–36, 58–78, 92–112, 115–135, 146–166, 173–193, 221–241, 256–276, 290–310, and 378–398; these read LIVA…VMPF, IVFS…GGLA, LGMG…QFLI, ALLG…ATQV, TLST…GLLA, PVFF…LFCI, ILSL…IAPI, VAFI…LSAP, ILIT…YVQT, and AVFL…WNSL.

This sequence belongs to the major facilitator superfamily. DHA1 family. MdtG (TC 2.A.1.2.20) subfamily.

Its subcellular location is the cell inner membrane. Functionally, confers resistance to fosfomycin and deoxycholate. In Escherichia coli (strain SMS-3-5 / SECEC), this protein is Multidrug resistance protein MdtG.